Consider the following 313-residue polypeptide: Pyrimidine-specific ribonucleoside hydrolase RihB (313 aa).

D11 (proton acceptor) is an active-site residue. 3 residues coordinate Ca(2+): D11, D16, and V124. 2 residues coordinate substrate: Q227 and H239. D240 provides a ligand contact to Ca(2+).

The protein belongs to the IUNH family. RihB subfamily. In terms of assembly, homotetramer. It depends on Ca(2+) as a cofactor.

The enzyme catalyses a pyrimidine ribonucleoside + H2O = a pyrimidine nucleobase + D-ribose. Hydrolyzes cytidine or uridine to ribose and cytosine or uracil, respectively. Has a clear preference for cytidine over uridine. Strictly specific for ribonucleosides. The sequence is that of Pyrimidine-specific ribonucleoside hydrolase RihB from Escherichia coli (strain SMS-3-5 / SECEC).